Consider the following 191-residue polypeptide: UPF0312 protein PSPA7_0523 (191 aa).

An N-terminal signal peptide occupies residues 1–23 (MLKKTLAALALGSALFTAGQAMA).

Belongs to the UPF0312 family. Type 1 subfamily.

The protein localises to the periplasm. The chain is UPF0312 protein PSPA7_0523 from Pseudomonas paraeruginosa (strain DSM 24068 / PA7) (Pseudomonas aeruginosa (strain PA7)).